A 414-amino-acid chain; its full sequence is tRNA N6-adenosine threonylcarbamoyltransferase, mitochondrial (414 aa).

The transit peptide at 1–29 directs the protein to the mitochondrion; that stretch reads MLILTKTAGVFFKPSKRKVYEFLRSFNFH. An N6-acetyllysine mark is found at K74 and K140. A divalent metal cation contacts are provided by H147 and H151. Substrate is bound by residues 169 to 173 and D202; that span reads LISGG. Position 203 is an N6-acetyllysine (K203). Substrate contacts are provided by G222 and E226. N6-acetyllysine is present on residues K230, K240, and K299. Substrate contacts are provided by residues 329 to 330 and T357; that span reads SN. Residue D358 coordinates a divalent metal cation.

Belongs to the KAE1 / TsaD family. As to quaternary structure, monomer. It depends on a divalent metal cation as a cofactor. Widely expressed, with maximum expression in pituitary gland, prostate, rectum and uterus.

The protein resides in the mitochondrion. The enzyme catalyses L-threonylcarbamoyladenylate + adenosine(37) in tRNA = N(6)-L-threonylcarbamoyladenosine(37) in tRNA + AMP + H(+). In terms of biological role, required for the formation of a threonylcarbamoyl group on adenosine at position 37 (t(6)A37) in mitochondrial tRNAs that read codons beginning with adenine. Probably involved in the transfer of the threonylcarbamoyl moiety of threonylcarbamoyl-AMP (TC-AMP) to the N6 group of A37. Involved in mitochondrial genome maintenance. The polypeptide is tRNA N6-adenosine threonylcarbamoyltransferase, mitochondrial (Homo sapiens (Human)).